A 456-amino-acid polypeptide reads, in one-letter code: MVQISEVKGNGRDNRITTHSHIKGLGLKEDGTCESVGGGFIGQEKAREACGIITDLIKSKKFGGKGVLFAGGAGTGKTALALAIAQELGPKVPFCPMVGSEVYSSEIKKTEALMENFRRAIGLRVKETKEVYEGEVTEMVPEEAENPLGGYGKTISHVLLGLKTHKGTKQLKLDPSIYESLQREQVSTGDVIYIEANTGAVKRVGRSDAYATEFDLEAEEYVPMPKGEVHKRKEIVQDVTLHDLDIANARPQGGQDIMSMMGQLMKPKKTEITDKLRGEINKVVNKYIEQGIAELIPGVLFIDEVHMLDIECFTYLNQALESTISPIVIFASNRGICTIRGTEDIQAPHGIPTDLLDRLLIVRTLPYSESEIRSILQIRAKVENIILTDECLDKLAQEGSRTSLRYVIQLLTPVSIIASLHGNKEIGVQDIEECNDLFLDARRSAQVVKSSSGFLQ.

Position 71-78 (Gly-71–Thr-78) interacts with ATP.

This sequence belongs to the RuvB family. As to quaternary structure, may form heterododecamers with RVB2. Component of the SWR1 chromatin remodeling complex, the INO80 chromatin remodeling complex, and of the R2TP complex.

The protein localises to the nucleus. The catalysed reaction is ATP + H2O = ADP + phosphate + H(+). In terms of biological role, DNA helicase which participates in several chromatin remodeling complexes, including the SWR1 and the INO80 complexes. The SWR1 complex mediates the ATP-dependent exchange of histone H2A for the H2A variant HZT1 leading to transcriptional regulation of selected genes by chromatin remodeling. The INO80 complex remodels chromatin by shifting nucleosomes and is involved in DNA repair. Also involved in pre-rRNA processing. This chain is RuvB-like helicase 1 (rvb1), found in Schizosaccharomyces pombe (strain 972 / ATCC 24843) (Fission yeast).